The chain runs to 1154 residues: Serine-aspartate repeat-containing protein E (1154 aa).

The first 52 residues, 1–52, serve as a signal peptide directing secretion; sequence MINRDNKKAITKKGMISNRLNKFSIRKYTVGTASILVGTTLIFGLGNQEAKA. Residues 23-34 carry the YSIRK-G/S signaling motif motif; it reads FSIRKYTVGTAS. A ligand binding A region region spans residues 53 to 606; sequence AENTSTENAK…GDGTVKPEEK (554 aa). The tract at residues 54 to 230 is disordered; sequence ENTSTENAKQ…SKEELKNNPE (177 aa). A compositionally biased stretch (basic and acidic residues) spans 61–75; it reads AKQDDATTSDNKEVV. The span at 77-90 shows a compositional bias: low complexity; that stretch reads ETENNSTTENNSTN. The span at 92-108 shows a compositional bias: basic and acidic residues; it reads IKKETNTDSQPEAKKES. Residues 118 to 129 are compositionally biased toward polar residues; it reads NNVTATTETKPQ. Basic and acidic residues predominate over residues 130 to 145; that stretch reads NIEKENVKPSTDKTAT. Over residues 166–178 the composition is skewed to low complexity; the sequence is TTKPSTSEPSTSE. Polar residues predominate over residues 179-212; that stretch reads IQTKPTTPQESTNIENSQPQPTPSKVDNQVTDAT. The segment covering 221–230 has biased composition (basic and acidic residues); sequence SKEELKNNPE. CNA-B domains follow at residues 607 to 719, 720 to 829, and 830 to 940; these read LYKI…YKEP, KYNL…YKTP, and KYSL…EEDT. Positions 904–1129 are disordered; that stretch reads VTNTTEDDKD…TGSENNGSNN (226 aa). Composition is skewed to acidic residues over residues 908–918 and 935–1093; these read TEDDKDADGGE and YFEE…DSDS. Positions 1117–1121 match the LPXTG sorting signal motif; the sequence is LPETG. Position 1120 is a pentaglycyl murein peptidoglycan amidated threonine (T1120). Residues 1121 to 1154 constitute a propeptide, removed by sortase; the sequence is GSENNGSNNATLFGGLFAALGSLLLFGRRKKQNK.

The protein belongs to the serine-aspartate repeat-containing protein (SDr) family. In terms of assembly, interacts with host complement factor H/CFAH (via C-terminus). Interacts with host complement regulator C4BPA.

The protein resides in the secreted. It localises to the cell wall. Its function is as follows. Cell surface-associated calcium-binding protein which plays an important role in adhesion and pathogenesis. Contributes to the resistance to killing by innate immune components in blood and thus attenuates bacterial clearance by interacting with host complement factor H/CFAH and modulating its activity. Also inhibits bacterial opsonization and killing by interacting with host complement regulator C4BPA and thus inhibiting classical complement pathway activation. The protein is Serine-aspartate repeat-containing protein E (sdrE) of Staphylococcus aureus (strain USA300).